Reading from the N-terminus, the 243-residue chain is Probable heat shock transcription factor (243 aa).

Residues 9–102 mediate DNA binding; it reads INKFIRRLYK…GDNLLPCIQR (94 aa). Residues 121 to 164 are involved in trimerization; it reads QLQDLLQYLNNQNFKLEGEIKSLKDRVDQQDCTINGLVQLLTRI.

It belongs to the HSF family. In terms of assembly, homotrimer. Homotrimerization increases the affinity of HSF1 to DNA.

It is found in the nucleus. Its function is as follows. DNA-binding transcription factor that specifically binds heat shock promoter elements (HSE) and activates transcription. This Vairimorpha ceranae (strain BRL01) (Microsporidian parasite) protein is Probable heat shock transcription factor.